The sequence spans 639 residues: MDRVLLRWISLFWLTAMVEGLQVTVPDKKKVAMLFQPTVLRCHFSTSSHQPAVVQWKFKSYCQDRMGESLGMSSTRAQSLSKRNLEWDPYLDCLDSRRTVRVVASKQGSTVTLGDFYRGREITIVHDADLQIGKLMWGDSGLYYCIITTPDDLEGKNEDSVELLVLGRTGLLADLLPSFAVEIMPEWVFVGLVLLGVFLFFVLVGICWCQCCPHSCCCYVRCPCCPDSCCCPQALYEAGKAAKAGYPPSVSGVPGPYSIPSVPLGGAPSSGMLMDKPHPPPLAPSDSTGGSHSVRKGYRIQADKERDSMKVLYYVEKELAQFDPARRMRGRYNNTISELSSLHEEDSNFRQSFHQMRSKQFPVSGDLESNPDYWSGVMGGSSGASRGPSAMEYNKEDRESFRHSQPRSKSEMLSRKNFATGVPAVSMDELAAFADSYGQRPRRADGNSHEARGGSRFERSESRAHSGFYQDDSLEEYYGQRSRSREPLTDADRGWAFSPARRRPAEDAHLPRLVSRTPGTAPKYDHSYLGSARERQARPEGASRGGSLETPSKRSAQLGPRSASYYAWSPPGTYKAGSSQDDQEDASDDALPPYSELELTRGPSYRGRDLPYHSNSEKKRKKEPAKKTNDFPTRMSLVV.

An N-terminal signal peptide occupies residues 1 to 20 (MDRVLLRWISLFWLTAMVEG). Positions 21 to 162 (LQVTVPDKKK…LEGKNEDSVE (142 aa)) constitute an Ig-like V-type domain. The Lumenal portion of the chain corresponds to 21 to 186 (LQVTVPDKKK…PSFAVEIMPE (166 aa)). Cys42 and Cys145 form a disulfide bridge. Residues 187–207 (WVFVGLVLLGVFLFFVLVGIC) form a helical membrane-spanning segment. Residues 208–639 (WCQCCPHSCC…DFPTRMSLVV (432 aa)) lie on the Cytoplasmic side of the membrane. Disordered stretches follow at residues 273 to 295 (LMDKPHPPPLAPSDSTGGSHSVR), 374 to 415 (WSGV…MLSR), and 437 to 639 (YGQR…SLVV). Basic and acidic residues-rich tracts occupy residues 393 to 414 (YNKEDRESFRHSQPRSKSEMLS) and 442 to 464 (RRADGNSHEARGGSRFERSESRA). Position 473 is a phosphoserine (Ser473). The span at 483–493 (RSREPLTDADR) shows a compositional bias: basic and acidic residues. At Arg544 the chain carries Omega-N-methylarginine. A Phosphoserine modification is found at Ser579. Over residues 606–617 (RGRDLPYHSNSE) the composition is skewed to basic and acidic residues.

The protein belongs to the immunoglobulin superfamily. LISCH7 family. In terms of assembly, interacts with MARVELD2 and OCLN. Interacts with P4HB AND HSPA5; the interaction with HSPA5 stabilizes ILDR2 expression. Interacts (via C-terminus) with TRA2A, TRA2B and SRSF1. Expressed in testis, brain, pituitary, colon, heart, nerves, prostate, esophagus, lung liver and small intestine. Highly expressed in macrophages, also expressed in monocytes and at low levels in NK and NKT cells (at protein level).

Its subcellular location is the endoplasmic reticulum membrane. It localises to the cell junction. The protein resides in the tight junction. It is found in the nucleus. In terms of biological role, may be involved in ER stress pathways with effects on lipid homeostasis and insulin secretion. With ILDR1 and LSR, involved in the maintain of the epithelial barrier function through the recruitment of MARVELD2/tricellulin to tricellular tight junctions. Also functions as a B7-like protein family member expressed on immune cells and inflamed tissue and with T-cell inhibitory activity. In the inner ear, may regulate alternative pre-mRNA splicing via binding to TRA2A, TRA2B and SRSF1. This Homo sapiens (Human) protein is Immunoglobulin-like domain-containing receptor 2.